A 145-amino-acid chain; its full sequence is Lysozyme-like protein 4 (145 aa).

Positions 1–19 are cleaved as a signal peptide; the sequence is MKASVVLSLIGYLVVPSDT. In terms of domain architecture, C-type lysozyme spans 20-145; it reads AVLGRCVVAK…LARWLDGCKL (126 aa). 4 disulfides stabilise this stretch: Cys25–Cys143, Cys49–Cys130, Cys84–Cys95, and Cys91–Cys109. Glu54 is an active-site residue.

The protein belongs to the glycosyl hydrolase 22 family. As to quaternary structure, monomer.

It is found in the secreted. It localises to the cytoplasmic vesicle. The protein resides in the secretory vesicle. The protein localises to the acrosome. Its subcellular location is the cell projection. It is found in the cilium. It localises to the flagellum. May be involved in fertilization. Has no detectable bacteriolytic and lysozyme activities in vitro. The protein is Lysozyme-like protein 4 (LYZL4) of Bos taurus (Bovine).